A 556-amino-acid polypeptide reads, in one-letter code: GDP-Man:Man(3)GlcNAc(2)-PP-Dol alpha-1,2-mannosyltransferase (556 aa).

The Lumenal segment spans residues M1–T7. The helical transmembrane segment at Y8–W28 threads the bilayer. Over R29–Y184 the chain is Cytoplasmic. Positions S64 to T79 are enriched in basic and acidic residues. The tract at residues S64–T86 is disordered. The helical intramembrane region spans F185–L205. Over V206 to H454 the chain is Cytoplasmic. Positions F455–G475 form an intramembrane region, helical. Topologically, residues G476–Q556 are cytoplasmic.

The protein belongs to the glycosyltransferase group 1 family. Glycosyltransferase 4 subfamily.

Its subcellular location is the endoplasmic reticulum membrane. It carries out the reaction an alpha-D-Man-(1-&gt;3)-[alpha-D-Man-(1-&gt;6)]-beta-D-Man-(1-&gt;4)-beta-D-GlcNAc-(1-&gt;4)-alpha-D-GlcNAc-diphospho-di-trans,poly-cis-dolichol + 2 GDP-alpha-D-mannose = an alpha-D-Man-(1-&gt;2)-alpha-D-Man-(1-&gt;2)-alpha-D-Man-(1-&gt;3)-[alpha-D-Man-(1-&gt;6)]-beta-D-Man-(1-&gt;4)-beta-D-GlcNAc-(1-&gt;4)-alpha-D-GlcNAc-diphospho-di-trans,poly-cis-dolichol + 2 GDP + 2 H(+). It participates in protein modification; protein glycosylation. In terms of biological role, GDP-Man:Man(3)GlcNAc(2)-PP-Dol alpha-1,2-mannosyltransferase that operates in the biosynthetic pathway of dolichol-linked oligosaccharides, the glycan precursors employed in protein asparagine (N)-glycosylation. The assembly of dolichol-linked oligosaccharides begins on the cytosolic side of the endoplasmic reticulum membrane and finishes in its lumen. The sequential addition of sugars to dolichol pyrophosphate produces dolichol-linked oligosaccharides containing fourteen sugars, including two GlcNAcs, nine mannoses and three glucoses. Once assembled, the oligosaccharide is transferred from the lipid to nascent proteins by oligosaccharyltransferases. Catalyzes, on the cytoplasmic face of the endoplasmic reticulum, the addition of the fourth and fifth mannose residues to the dolichol-linked oligosaccharide chain, to produce Man(5)GlcNAc(2)-PP-dolichol core oligosaccharide. The protein is GDP-Man:Man(3)GlcNAc(2)-PP-Dol alpha-1,2-mannosyltransferase (alg-11) of Neurospora crassa (strain ATCC 24698 / 74-OR23-1A / CBS 708.71 / DSM 1257 / FGSC 987).